The following is a 515-amino-acid chain: AAA ATPase forming ring-shaped complexes (515 aa).

Residues 2–49 adopt a coiled-coil conformation; it reads NDHDEETLASLQQANDQLMAKNHALVKALSRATQEMTKTKAQLNQLAG. 240-245 contributes to the ATP binding site; the sequence is GNGKTL.

The protein belongs to the AAA ATPase family. As to quaternary structure, homohexamer. Assembles into a hexameric ring structure.

The polypeptide is AAA ATPase forming ring-shaped complexes (Bifidobacterium adolescentis (strain ATCC 15703 / DSM 20083 / NCTC 11814 / E194a)).